We begin with the raw amino-acid sequence, 126 residues long: Large ribosomal subunit protein bL12 (126 aa).

Residues 107 to 116 (EDAEKAKSQL) show a composition bias toward basic and acidic residues. The interval 107–126 (EDAEKAKSQLEEAGATVELK) is disordered.

The protein belongs to the bacterial ribosomal protein bL12 family. In terms of assembly, homodimer. Part of the ribosomal stalk of the 50S ribosomal subunit. Forms a multimeric L10(L12)X complex, where L10 forms an elongated spine to which 2 to 4 L12 dimers bind in a sequential fashion. Binds GTP-bound translation factors.

In terms of biological role, forms part of the ribosomal stalk which helps the ribosome interact with GTP-bound translation factors. Is thus essential for accurate translation. The protein is Large ribosomal subunit protein bL12 of Bifidobacterium adolescentis (strain ATCC 15703 / DSM 20083 / NCTC 11814 / E194a).